Here is a 702-residue protein sequence, read N- to C-terminus: Polyribonucleotide nucleotidyltransferase (702 aa).

2 residues coordinate Mg(2+): D487 and D493. Residues 554–613 enclose the KH domain; sequence PKILTMQINPDKIRDVIGPSGKQINKIIEETGVKIDIEQDGTIFISSVNEEMNKKAKKII. The S1 motif domain occupies 623-691; it reads GQVYLGKVKR…KQGRVNLSRK (69 aa).

This sequence belongs to the polyribonucleotide nucleotidyltransferase family. It depends on Mg(2+) as a cofactor.

The protein resides in the cytoplasm. The catalysed reaction is RNA(n+1) + phosphate = RNA(n) + a ribonucleoside 5'-diphosphate. In terms of biological role, involved in mRNA degradation. Catalyzes the phosphorolysis of single-stranded polyribonucleotides processively in the 3'- to 5'-direction. In Anoxybacillus flavithermus (strain DSM 21510 / WK1), this protein is Polyribonucleotide nucleotidyltransferase.